Reading from the N-terminus, the 154-residue chain is MAKKKSPGTLAENRKARHDYNIEDTIEAGIVLQGTEIKSIRRGSANLKDSYAQVKNGEMYLNNMHIAPYEEGNRFNHDPLRSRKLLLHKREIIKLGDQTREIGYSIVPLKLYLKHGHCKVLLGVARGKKKYDKRQALKEKAVKRDVARDMKARY.

The protein belongs to the SmpB family.

The protein resides in the cytoplasm. In terms of biological role, required for rescue of stalled ribosomes mediated by trans-translation. Binds to transfer-messenger RNA (tmRNA), required for stable association of tmRNA with ribosomes. tmRNA and SmpB together mimic tRNA shape, replacing the anticodon stem-loop with SmpB. tmRNA is encoded by the ssrA gene; the 2 termini fold to resemble tRNA(Ala) and it encodes a 'tag peptide', a short internal open reading frame. During trans-translation Ala-aminoacylated tmRNA acts like a tRNA, entering the A-site of stalled ribosomes, displacing the stalled mRNA. The ribosome then switches to translate the ORF on the tmRNA; the nascent peptide is terminated with the 'tag peptide' encoded by the tmRNA and targeted for degradation. The ribosome is freed to recommence translation, which seems to be the essential function of trans-translation. This chain is SsrA-binding protein, found in Staphylococcus aureus (strain USA300).